The following is a 236-amino-acid chain: uncharacterized protein (236 aa).

Residues 1–73 are disordered; the sequence is MEPGGSENAA…GGGWGWGNTQ (73 aa).

This is an uncharacterized protein from Homo sapiens (Human).